A 1073-amino-acid polypeptide reads, in one-letter code: Activated Cdc42 kinase Ack (1073 aa).

The segment at isoleucine 88–asparagine 110 is disordered. The region spanning isoleucine 123–leucine 383 is the Protein kinase domain. Residues leucine 129 to valine 137 and lysine 156 contribute to the ATP site. The Proton acceptor role is filled by aspartate 250. The region spanning methionine 386–valine 446 is the SH3 domain. Disordered stretches follow at residues glutamine 484–glutamine 506, proline 803–alanine 834, and alanine 862–glutamine 882. The segment covering serine 812–proline 826 has biased composition (low complexity). One can recognise a UBA domain in the interval glycine 1029 to alanine 1072.

This sequence belongs to the protein kinase superfamily. Tyr protein kinase family. In terms of assembly, interacts with yki and ex. Interacts with drk. Likely to be a member of an axonal guidance receptor complex that includes SH3PX1, dock and Dscam. Interacts (via N-terminus) with dock. Interacts with SH3PX1 (via SH3 domain). Mg(2+) is required as a cofactor. In terms of processing, phosphorylated. Autophosphorylated. As to expression, detected in ovaries (at protein level). In adults, relatively higher expression in the head compared to the body.

The protein resides in the cytoplasm. The protein localises to the cytoplasmic vesicle. It is found in the clathrin-coated vesicle. It catalyses the reaction L-tyrosyl-[protein] + ATP = O-phospho-L-tyrosyl-[protein] + ADP + H(+). The catalysed reaction is L-threonyl-[protein] + ATP = O-phospho-L-threonyl-[protein] + ADP + H(+). Functionally, non-receptor tyrosine-protein and serine/threonine-protein kinase that is implicated in diverse biological functions such as cell survival, cell differentiation, cell growth and proliferation. Phosphorylates SH3PX1 and ex. Phosphorylates SH3PX1 predominantly on 'Tyr-56', which likely promotes the recruitment of SH3PX1 to an axonal guidance receptor complex that includes dock and Dscam; because phosphorylation of SH3PX1 increases its interaction with the complex member dock while decreasing its interaction with the actin cytoskeleton modulator WASp. In the wing and eye, promotes tissue growth, and during embryogenesis coordinates cell shape changes required for correct dorsal closure. Functions in the negative regulation of the Hippo/SWH (Sav/Wts/Hpo) signaling pathway by enhancing yki activity thereby promoting cell proliferation and inhibiting apoptosis. This is accomplished, at least in part, by phosphorylating ex thereby reducing its ability to efficiently activate the Hippo signaling cascade. In the eye disk, wing disk and possibly spermatids, inhibits programmed cell death induced by hid and rpr through a mechanism that is independent of the MAP kinase signal transduction pathway. Essential for male and female fertility. During oogenesis required for the correct temporal assembly, and consequently the catalytic activity of long Ctps filaments (cytoophidium) in the germline nurse cells, likely by phosphorylating an unidentified substrate that is essential for linking individual Ctps filaments into large, catalytically active assemblies. The protein is Activated Cdc42 kinase Ack of Drosophila melanogaster (Fruit fly).